Reading from the N-terminus, the 496-residue chain is Cytochrome P450 71AV8 (496 aa).

A helical membrane pass occupies residues 3–23; it reads ISIPTTLGLAVIIFIIFKLLT. A heme-binding site is contributed by cysteine 432.

The protein belongs to the cytochrome P450 family. It depends on heme as a cofactor.

It localises to the membrane. In terms of biological role, valencene oxidase, which preferentially hydroylates the C2 position of (+)-valencene in the trans-orientation, producing trans-nootkatol that can be further oxidized to (+)-nootkatone. Can also catalyze the three-step conversion of germacrene A to germacra-1(10),4,11(13)-trien-12-oic acid and the partial conversion of the non-natural substrate amorpha-4,11-diene into artemisinic alcohol and artemisinic aldehyde. The polypeptide is Cytochrome P450 71AV8 (CYP71AV8) (Cichorium intybus (Chicory)).